The following is a 308-amino-acid chain: D-alanine--D-alanine ligase (308 aa).

Positions 104 to 301 (KQIWQGSDLP…FDELCVAILD (198 aa)) constitute an ATP-grasp domain. Residue 130–185 (IAELGLPVIIKPVHEGSSVGMSKVEKAEDFAAAIEKATQHDAVVMAEKWITGREFT) coordinates ATP. Mg(2+)-binding residues include Asp-255, Glu-268, and Asn-270.

This sequence belongs to the D-alanine--D-alanine ligase family. Mg(2+) serves as cofactor. It depends on Mn(2+) as a cofactor.

It localises to the cytoplasm. The catalysed reaction is 2 D-alanine + ATP = D-alanyl-D-alanine + ADP + phosphate + H(+). It participates in cell wall biogenesis; peptidoglycan biosynthesis. Its function is as follows. Cell wall formation. In Acinetobacter baumannii (strain AB307-0294), this protein is D-alanine--D-alanine ligase.